The following is a 94-amino-acid chain: Small polypeptide ROTUNDIFOLIA LIKE 1 (94 aa).

The segment covering 1 to 13 has biased composition (polar residues); that stretch reads MRQCASASSSTSR. The interval 1–26 is disordered; the sequence is MRQCASASSSTSRPPEAAGEEGKRRR. Residues 28-59 form a required for DVL/RTFL small polypeptide activity region; sequence RRGWLLQAAAREQRSRFYIFRRCVAMLLCWYK. The helical transmembrane segment at 63–82 threads the bilayer; the sequence is ITPYNVVPLGIYGLVWFATM.

The protein belongs to the DVL/RTFL small polypeptides family.

The protein localises to the cell membrane. Its function is as follows. Small polypeptide acting as a regulatory molecule which coordinates cellular responses required for differentiation, growth and development, probably by restricting polar cell proliferation in lateral organs. The protein is Small polypeptide ROTUNDIFOLIA LIKE 1 of Oryza sativa subsp. japonica (Rice).